The following is a 308-amino-acid chain: UPF0282 protein SSO3251 (308 aa).

Belongs to the UPF0282 family.

This Saccharolobus solfataricus (strain ATCC 35092 / DSM 1617 / JCM 11322 / P2) (Sulfolobus solfataricus) protein is UPF0282 protein SSO3251.